Reading from the N-terminus, the 117-residue chain is MIHILFIMVGGGIGAVIRAWLTDVFKSKITSPIPIATLIVNLVGSFLIGFVYGIAQDYQLFSLFFITGVLGGLTTFSTLSYEIVQFISPSFKPVQFFSYSILQFVIGFISCFIGYSI.

Helical transmembrane passes span 1–21 (MIHILFIMVGGGIGAVIRAWL), 35–55 (IATLIVNLVGSFLIGFVYGIA), 60–80 (LFSLFFITGVLGGLTTFSTLS), and 97–117 (FSYSILQFVIGFISCFIGYSI). 2 residues coordinate Na(+): glycine 71 and threonine 74.

This sequence belongs to the fluoride channel Fluc/FEX (TC 1.A.43) family.

The protein resides in the cell membrane. The enzyme catalyses fluoride(in) = fluoride(out). Its activity is regulated as follows. Na(+) is not transported, but it plays an essential structural role and its presence is essential for fluoride channel function. Functionally, fluoride-specific ion channel. Important for reducing fluoride concentration in the cell, thus reducing its toxicity. The protein is Fluoride-specific ion channel FluC 1 of Staphylococcus haemolyticus (strain JCSC1435).